The chain runs to 429 residues: Arginine biosynthesis bifunctional protein ArgJ (429 aa).

Substrate-binding residues include Thr181, Lys207, Thr218, Glu302, Asn424, and Ser429. Catalysis depends on Thr218, which acts as the Nucleophile.

This sequence belongs to the ArgJ family. As to quaternary structure, heterotetramer of two alpha and two beta chains.

Its subcellular location is the cytoplasm. It catalyses the reaction N(2)-acetyl-L-ornithine + L-glutamate = N-acetyl-L-glutamate + L-ornithine. The catalysed reaction is L-glutamate + acetyl-CoA = N-acetyl-L-glutamate + CoA + H(+). It functions in the pathway amino-acid biosynthesis; L-arginine biosynthesis; L-ornithine and N-acetyl-L-glutamate from L-glutamate and N(2)-acetyl-L-ornithine (cyclic): step 1/1. It participates in amino-acid biosynthesis; L-arginine biosynthesis; N(2)-acetyl-L-ornithine from L-glutamate: step 1/4. Functionally, catalyzes two activities which are involved in the cyclic version of arginine biosynthesis: the synthesis of N-acetylglutamate from glutamate and acetyl-CoA as the acetyl donor, and of ornithine by transacetylation between N(2)-acetylornithine and glutamate. The chain is Arginine biosynthesis bifunctional protein ArgJ from Chlorobium chlorochromatii (strain CaD3).